The following is an 85-amino-acid chain: Large ribosomal subunit protein bL27 (85 aa).

The disordered stretch occupies residues 1–23 (MAHKKAGGSSRNGRDSESKRLGV).

It belongs to the bacterial ribosomal protein bL27 family.

In Methylococcus capsulatus (strain ATCC 33009 / NCIMB 11132 / Bath), this protein is Large ribosomal subunit protein bL27.